The sequence spans 360 residues: Aminomethyltransferase (360 aa).

This sequence belongs to the GcvT family. The glycine cleavage system is composed of four proteins: P, T, L and H.

The enzyme catalyses N(6)-[(R)-S(8)-aminomethyldihydrolipoyl]-L-lysyl-[protein] + (6S)-5,6,7,8-tetrahydrofolate = N(6)-[(R)-dihydrolipoyl]-L-lysyl-[protein] + (6R)-5,10-methylene-5,6,7,8-tetrahydrofolate + NH4(+). In terms of biological role, the glycine cleavage system catalyzes the degradation of glycine. This Pseudoalteromonas translucida (strain TAC 125) protein is Aminomethyltransferase.